A 349-amino-acid polypeptide reads, in one-letter code: Isopentenyl-diphosphate delta-isomerase (349 aa).

6–7 lines the substrate pocket; it reads RK. FMN is bound by residues 62–64, Ser93, and Asn122; that span reads AMT. Gln152 contacts substrate. Mg(2+) is bound at residue Glu153. Residues Lys184, Thr214, 258 to 259, and 280 to 281 contribute to the FMN site; these read GG and AG.

It belongs to the IPP isomerase type 2 family. As to quaternary structure, homooctamer. Dimer of tetramers. Requires FMN as cofactor. NADPH is required as a cofactor. It depends on Mg(2+) as a cofactor.

The protein resides in the cytoplasm. The catalysed reaction is isopentenyl diphosphate = dimethylallyl diphosphate. Its function is as follows. Involved in the biosynthesis of isoprenoids. Catalyzes the 1,3-allylic rearrangement of the homoallylic substrate isopentenyl (IPP) to its allylic isomer, dimethylallyl diphosphate (DMAPP). This is Isopentenyl-diphosphate delta-isomerase from Bacillus cereus (strain ATCC 10987 / NRS 248).